The chain runs to 133 residues: UPF0225 protein BPP1723 (133 aa).

The protein belongs to the UPF0225 family.

The sequence is that of UPF0225 protein BPP1723 from Bordetella parapertussis (strain 12822 / ATCC BAA-587 / NCTC 13253).